Here is a 116-residue protein sequence, read N- to C-terminus: Prefoldin subunit beta (116 aa).

Belongs to the prefoldin subunit beta family. In terms of assembly, heterohexamer of two alpha and four beta subunits.

Its subcellular location is the cytoplasm. Functionally, molecular chaperone capable of stabilizing a range of proteins. Seems to fulfill an ATP-independent, HSP70-like function in archaeal de novo protein folding. The sequence is that of Prefoldin subunit beta (pfdB) from Archaeoglobus fulgidus (strain ATCC 49558 / DSM 4304 / JCM 9628 / NBRC 100126 / VC-16).